Consider the following 255-residue polypeptide: F-box/SPRY domain-containing protein 1 (255 aa).

Residues D3 to H51 enclose the F-box domain. Residues L61–M253 form the B30.2/SPRY domain.

Belongs to the FBXO45/Fsn family. Component of an E3 ubiquitin ligase complex composed of hiw and Fsn.

Its subcellular location is the synapse. It participates in protein modification; protein ubiquitination. Functionally, required in the presynaptic motoneuron to down-regulate the levels of wnd and restrain synaptic terminal growth at the neuromuscular junction (NMJ). The polypeptide is F-box/SPRY domain-containing protein 1 (Drosophila ananassae (Fruit fly)).